The sequence spans 94 residues: Ribonuclease P protein component 1 (94 aa).

The protein belongs to the eukaryotic/archaeal RNase P protein component 1 family. In terms of assembly, consists of a catalytic RNA component and at least 4-5 protein subunits.

The protein localises to the cytoplasm. The enzyme catalyses Endonucleolytic cleavage of RNA, removing 5'-extranucleotides from tRNA precursor.. Its function is as follows. Part of ribonuclease P, a protein complex that generates mature tRNA molecules by cleaving their 5'-ends. In Thermofilum pendens (strain DSM 2475 / Hrk 5), this protein is Ribonuclease P protein component 1.